Here is a 235-residue protein sequence, read N- to C-terminus: Probable septum site-determining protein MinC (235 aa).

The interval 104–125 (KAVRPAPVEPATPSEPPQNANP) is disordered. Residues 110–119 (PVEPATPSEP) are compositionally biased toward pro residues.

This sequence belongs to the MinC family. Interacts with MinD and FtsZ.

Cell division inhibitor that blocks the formation of polar Z ring septums. Rapidly oscillates between the poles of the cell to destabilize FtsZ filaments that have formed before they mature into polar Z rings. Prevents FtsZ polymerization. The sequence is that of Probable septum site-determining protein MinC from Salmonella enteritidis PT4 (strain P125109).